Here is a 59-residue protein sequence, read N- to C-terminus: Large ribosomal subunit protein bL33 (59 aa).

It belongs to the bacterial ribosomal protein bL33 family.

The sequence is that of Large ribosomal subunit protein bL33 from Borreliella afzelii (strain PKo) (Borrelia afzelii).